Reading from the N-terminus, the 649-residue chain is 1,4-alpha-glucan branching enzyme GlgB (649 aa).

The active-site Nucleophile is Asp-315. Glu-366 functions as the Proton donor in the catalytic mechanism.

It belongs to the glycosyl hydrolase 13 family. GlgB subfamily. As to quaternary structure, monomer.

The catalysed reaction is Transfers a segment of a (1-&gt;4)-alpha-D-glucan chain to a primary hydroxy group in a similar glucan chain.. Its pathway is glycan biosynthesis; glycogen biosynthesis. Catalyzes the formation of the alpha-1,6-glucosidic linkages in glycogen by scission of a 1,4-alpha-linked oligosaccharide from growing alpha-1,4-glucan chains and the subsequent attachment of the oligosaccharide to the alpha-1,6 position. The protein is 1,4-alpha-glucan branching enzyme GlgB of Ligilactobacillus salivarius (strain UCC118) (Lactobacillus salivarius).